The chain runs to 412 residues: MAAAAGEEEEEEEAARESAARPAAGPALWRLPEELLLLICSYLDMRALGRLAQVCRWLRRFTSCDLLWRRIARASLNSGFTRLGTDLMTSVPVKERVKVSQNWRLGRCREGILLKWRCSQMPWMQLEDDSLYISQANFILAYQFRPDGASLNRRPLGVFAGHDEDVCHFVLANSHIVSAGGDGKIGIHKIHSTFTVKYSAHEQEVNCVDCKGGIIVSGSRDRTAKVWPLASGRLGQCLHTIQTEDRVWSIAISPLLSSFVTGTACCGHFSPLRIWDLNSGQLMTHLGSDFPPGAGVLDVMYESPFTLLSCGYDTYVRYWDLRTSVRKCVMEWEEPHDSTLYCLQTDGNHLLATGSSYYGVVRLWDRRQRACLHAFPLTSTPLSSPVYCLRLTTKHLYAALSYNLHVLDFQNP.

The F-box domain maps to 25 to 71 (GPALWRLPEELLLLICSYLDMRALGRLAQVCRWLRRFTSCDLLWRRI). WD repeat units lie at residues 154-190 (RPLGVFAGHDEDVCHFVLANSHIVSAGGDGKIGIHKI), 193-229 (TFTVKYSAHEQEVNCVDCKGGIIVSGSRDRTAKVWPL), 236-277 (QCLH…IWDL), 283-321 (MTHLGSDFPPGAGVLDVMYESPFTLLSCGYDTYVRYWDL), 327-366 (KCVMEWEEPHDSTLYCLQTDGNHLLATGSSYYGVVRLWDR), and 373-409 (HAFPLTSTPLSSPVYCLRLTTKHLYAALSYNLHVLDF).

In terms of assembly, part of a SCF (SKP1-cullin-F-box) protein ligase complex. Interacts with POUF51. Expressed in brain, kidney, lung and liver.

Functionally, probably recognizes and binds to some phosphorylated proteins and promotes their ubiquitination and degradation. Likely to be involved in key signaling pathways crucial for normal limb development. May participate in Wnt signaling. This chain is F-box/WD repeat-containing protein 4 (FBXW4), found in Homo sapiens (Human).